Here is a 349-residue protein sequence, read N- to C-terminus: Putative nuclease HARBI1 (349 aa).

Positions 149, 199, 225, and 261 each coordinate a divalent metal cation. The DDE Tnp4 domain maps to aspartate 149–asparagine 300.

Belongs to the HARBI1 family. As to quaternary structure, interacts with NAIF1. A divalent metal cation serves as cofactor. As to expression, detected in adult brain, eye, nerve tissue and lung. Detected in embryo.

The protein localises to the nucleus. Its subcellular location is the cytoplasm. Functionally, transposase-derived protein that may have nuclease activity (Potential). Does not have transposase activity. This Mus musculus (Mouse) protein is Putative nuclease HARBI1 (Harbi1).